A 526-amino-acid polypeptide reads, in one-letter code: Hyaluronidase-5 (526 aa).

A signal peptide spans 1 to 35; that stretch reads MRVLYFKHSFFRSLLKSNGLPQTLLVFLLIPCYLT. 5 cysteine pairs are disulfide-bonded: cysteine 60-cysteine 351, cysteine 223-cysteine 237, cysteine 376-cysteine 387, cysteine 381-cysteine 435, and cysteine 437-cysteine 443. The Proton donor role is filled by glutamate 147. N-linked (GlcNAc...) asparagine glycosylation is found at asparagine 165 and asparagine 179.

This sequence belongs to the glycosyl hydrolase 56 family. In terms of tissue distribution, expressed in testis, epididymal sperm and epididymides (at protein level). Expressed at highest levels in testis with lesser amounts in epididymal sperm.

The protein localises to the cell membrane. It is found in the cytoplasmic vesicle. The protein resides in the secretory vesicle. It localises to the acrosome membrane. Its subcellular location is the secreted. It catalyses the reaction Random hydrolysis of (1-&gt;4)-linkages between N-acetyl-beta-D-glucosamine and D-glucuronate residues in hyaluronate.. Catalyzes the hydrolysis of hyaluronan into smaller oligosaccharide fragments. Does not appear to be essential for fertilization. The sequence is that of Hyaluronidase-5 from Mus musculus (Mouse).